A 691-amino-acid chain; its full sequence is NADH-ubiquinone oxidoreductase 75 kDa subunit (691 aa).

The region spanning 1 to 78 (MVNVFVDGLS…NMKIFTNTPL (78 aa)) is the 2Fe-2S ferredoxin-type domain. Positions 34, 45, 48, and 62 each coordinate [2Fe-2S] cluster. One can recognise a 4Fe-4S His(Cys)3-ligated-type domain in the interval 78–117 (LVKKAREGVLEFLLVNHPLDCPICDQGGECDLQDLTMVYG). Residues H94, C98, C101, C107, C146, C149, C152, and C196 each contribute to the [4Fe-4S] cluster site. Residues 215-271 (LQSTESIDVSDAIGSNIRIDVRGSEIMRILPRLNEDVNEEWISDKARFCYDGLKRQR) form the 4Fe-4S Mo/W bis-MGD-type domain.

Belongs to the complex I 75 kDa subunit family. As to quaternary structure, complex I is composed of about 30 different subunits. It depends on [2Fe-2S] cluster as a cofactor. [4Fe-4S] cluster is required as a cofactor.

It localises to the mitochondrion inner membrane. It carries out the reaction a ubiquinone + NADH + 5 H(+)(in) = a ubiquinol + NAD(+) + 4 H(+)(out). Core subunit of the mitochondrial membrane respiratory chain NADH dehydrogenase (Complex I) that is believed to belong to the minimal assembly required for catalysis. Complex I functions in the transfer of electrons from NADH to the respiratory chain. The immediate electron acceptor for the enzyme is believed to be ubiquinone. This is the largest subunit of complex I and it is a component of the iron-sulfur (IP) fragment of the enzyme. It may form part of the active site crevice where NADH is oxidized. The polypeptide is NADH-ubiquinone oxidoreductase 75 kDa subunit (NAD11) (Reclinomonas americana).